The primary structure comprises 202 residues: Ribosome maturation factor RimP (202 aa).

The protein belongs to the RimP family.

It is found in the cytoplasm. Its function is as follows. Required for maturation of 30S ribosomal subunits. In Paracidovorax citrulli (strain AAC00-1) (Acidovorax citrulli), this protein is Ribosome maturation factor RimP.